The primary structure comprises 279 residues: Pantothenate synthetase (279 aa).

Residue 26-33 (MGNLHDGH) coordinates ATP. His33 functions as the Proton donor in the catalytic mechanism. Gln57 is a (R)-pantoate binding site. Position 57 (Gln57) interacts with beta-alanine. 144 to 147 (GKKD) lines the ATP pocket. Gln150 contributes to the (R)-pantoate binding site. ATP is bound at residue 181–184 (LSSR).

Belongs to the pantothenate synthetase family. Homodimer.

The protein localises to the cytoplasm. The enzyme catalyses (R)-pantoate + beta-alanine + ATP = (R)-pantothenate + AMP + diphosphate + H(+). Its pathway is cofactor biosynthesis; (R)-pantothenate biosynthesis; (R)-pantothenate from (R)-pantoate and beta-alanine: step 1/1. Catalyzes the condensation of pantoate with beta-alanine in an ATP-dependent reaction via a pantoyl-adenylate intermediate. This chain is Pantothenate synthetase, found in Janthinobacterium sp. (strain Marseille) (Minibacterium massiliensis).